A 59-amino-acid polypeptide reads, in one-letter code: Antitoxin Rv0909 (59 aa).

Functionally, antitoxin component of a type II toxin-antitoxin (TA) system. Upon expression in M.smegmatis neutralizes the effect of cognate toxin Rv0910. The sequence is that of Antitoxin Rv0909 from Mycobacterium tuberculosis (strain ATCC 25618 / H37Rv).